Consider the following 354-residue polypeptide: Biotin synthase (354 aa).

Residues N41–S265 enclose the Radical SAM core domain. Positions 56, 60, and 63 each coordinate [4Fe-4S] cluster. [2Fe-2S] cluster-binding residues include C100, C131, C191, and R263.

The protein belongs to the radical SAM superfamily. Biotin synthase family. As to quaternary structure, homodimer. The cofactor is [4Fe-4S] cluster. Requires [2Fe-2S] cluster as cofactor.

It catalyses the reaction (4R,5S)-dethiobiotin + (sulfur carrier)-SH + 2 reduced [2Fe-2S]-[ferredoxin] + 2 S-adenosyl-L-methionine = (sulfur carrier)-H + biotin + 2 5'-deoxyadenosine + 2 L-methionine + 2 oxidized [2Fe-2S]-[ferredoxin]. It participates in cofactor biosynthesis; biotin biosynthesis; biotin from 7,8-diaminononanoate: step 2/2. In terms of biological role, catalyzes the conversion of dethiobiotin (DTB) to biotin by the insertion of a sulfur atom into dethiobiotin via a radical-based mechanism. This is Biotin synthase from Shewanella woodyi (strain ATCC 51908 / MS32).